Consider the following 710-residue polypeptide: Polyribonucleotide nucleotidyltransferase (710 aa).

Asp-485 and Asp-491 together coordinate Mg(2+). One can recognise a KH domain in the interval 552-611 (PKILTLTINPDKIRDVIGPSGKVINKIIEETGVKIDIEQDGTVYISSLDTAMNQKAKQII). One can recognise an S1 motif domain in the interval 621 to 689 (GETYHGKVKR…NQGRVNLSRK (69 aa)).

It belongs to the polyribonucleotide nucleotidyltransferase family. Mg(2+) serves as cofactor.

The protein resides in the cytoplasm. The catalysed reaction is RNA(n+1) + phosphate = RNA(n) + a ribonucleoside 5'-diphosphate. Involved in mRNA degradation. Catalyzes the phosphorolysis of single-stranded polyribonucleotides processively in the 3'- to 5'-direction. In Shouchella clausii (strain KSM-K16) (Alkalihalobacillus clausii), this protein is Polyribonucleotide nucleotidyltransferase.